The primary structure comprises 284 residues: uncharacterized protein (284 aa).

One can recognise a Photolyase/cryptochrome alpha/beta domain in the interval 4-133 (PLHLFWHRRD…AVHRQWDQLL (130 aa)).

This is an uncharacterized protein from Synechococcus sp. (strain PCC 6716).